A 359-amino-acid chain; its full sequence is UDP-N-acetylglucosamine--N-acetylmuramyl-(pentapeptide) pyrophosphoryl-undecaprenol N-acetylglucosamine transferase (359 aa).

Residues 14–16 (TGG), N126, R166, S194, I248, and Q293 contribute to the UDP-N-acetyl-alpha-D-glucosamine site.

This sequence belongs to the glycosyltransferase 28 family. MurG subfamily.

Its subcellular location is the cell inner membrane. It carries out the reaction di-trans,octa-cis-undecaprenyl diphospho-N-acetyl-alpha-D-muramoyl-L-alanyl-D-glutamyl-meso-2,6-diaminopimeloyl-D-alanyl-D-alanine + UDP-N-acetyl-alpha-D-glucosamine = di-trans,octa-cis-undecaprenyl diphospho-[N-acetyl-alpha-D-glucosaminyl-(1-&gt;4)]-N-acetyl-alpha-D-muramoyl-L-alanyl-D-glutamyl-meso-2,6-diaminopimeloyl-D-alanyl-D-alanine + UDP + H(+). It functions in the pathway cell wall biogenesis; peptidoglycan biosynthesis. Functionally, cell wall formation. Catalyzes the transfer of a GlcNAc subunit on undecaprenyl-pyrophosphoryl-MurNAc-pentapeptide (lipid intermediate I) to form undecaprenyl-pyrophosphoryl-MurNAc-(pentapeptide)GlcNAc (lipid intermediate II). The polypeptide is UDP-N-acetylglucosamine--N-acetylmuramyl-(pentapeptide) pyrophosphoryl-undecaprenol N-acetylglucosamine transferase (Verminephrobacter eiseniae (strain EF01-2)).